Here is a 326-residue protein sequence, read N- to C-terminus: Transposase for insertion sequence element IS4351 (326 aa).

One can recognise an Integrase catalytic domain in the interval 156 to 317 (IDERPEIVEL…TPNEKFKQII (162 aa)).

It belongs to the transposase IS30 family.

In terms of biological role, required for the transposition of the insertion element. The polypeptide is Transposase for insertion sequence element IS4351 (Bacteroides fragilis).